The following is a 206-amino-acid chain: Phosphatidyl-N-methylethanolamine N-methyltransferase (206 aa).

At 1-20 (MKESVQEIIQQLIHSVDLQS) the chain is on the lumenal side. The segment at residues 21-41 (SKFQLAIVCTMFNPIFWNIVA) is an intramembrane region (helical). Topologically, residues 42–53 (RMEYHKHSLTKM) are lumenal. The chain crosses the membrane as a helical span at residues 54-74 (CGGARKGCYMLAATIFSLGIV). Over 75 to 101 (RDMVYESALREQPTCSLITGENWTKLG) the chain is Cytoplasmic. A helical transmembrane segment spans residues 102–122 (VALFGLGQVLVLSSMYKLGIT). Position 106 to 108 (106 to 108 (GLG)) interacts with S-adenosyl-L-methionine. At 123-165 (GTYLGDYFGILMDERVTGFPFNVSNNPMYQGSTLSFLGIALYK) the chain is on the lumenal side. The chain crosses the membrane as a helical span at residues 166-186 (GKPAGLVVSAVVYFMYKIALR). Over 187–206 (WEEPFTAMIYANRDKAKKNM) the chain is Cytoplasmic. S-adenosyl-L-methionine is bound at residue 188–189 (EE).

This sequence belongs to the class VI-like SAM-binding methyltransferase superfamily. PEMT/PEM2 methyltransferase family.

It localises to the endoplasmic reticulum membrane. The protein resides in the mitochondrion membrane. It catalyses the reaction a 1,2-diacyl-sn-glycero-3-phosphoethanolamine + S-adenosyl-L-methionine = a 1,2-diacyl-sn-glycero-3-phospho-N-methylethanolamine + S-adenosyl-L-homocysteine + H(+). It carries out the reaction a 1,2-diacyl-sn-glycero-3-phospho-N-methylethanolamine + S-adenosyl-L-methionine = a 1,2-diacyl-sn-glycero-3-phospho-N,N-dimethylethanolamine + S-adenosyl-L-homocysteine + H(+). The catalysed reaction is a 1,2-diacyl-sn-glycero-3-phospho-N,N-dimethylethanolamine + S-adenosyl-L-methionine = a 1,2-diacyl-sn-glycero-3-phosphocholine + S-adenosyl-L-homocysteine + H(+). Its pathway is phospholipid metabolism; phosphatidylcholine biosynthesis. Its function is as follows. Catalyzes the second two steps of the methylation pathway of phosphatidylcholine biosynthesis, the SAM-dependent methylation of phosphatidylmonomethylethanolamine (PMME) to phosphatidyldimethylethanolamine (PDME) and of PDME to phosphatidylcholine (PC). Can also catalyze the first methylation reaction of PE to PMME in the absence of PE methyltransferase CHO2. In Saccharomyces cerevisiae (strain ATCC 204508 / S288c) (Baker's yeast), this protein is Phosphatidyl-N-methylethanolamine N-methyltransferase.